The chain runs to 260 residues: Dehydrin ERD10 (260 aa).

3 disordered regions span residues 1–187 (MAEE…EEEK), 197–216 (KLPG…TTPL), and 240–260 (KLPG…KVSD). At A2 the chain carries N-acetylalanine. Residues 26 to 44 (EIKERGMFDFLKKKEEVKP) are compositionally biased toward basic and acidic residues. A Phosphoserine modification is found at S61. Basic and acidic residues-rich tracts occupy residues 67–102 (VAKH…DKLH), 130–140 (IVEGDHVKTVE), 148–162 (DRIK…KPGG), 176–187 (SVEDHKPEEEEK), and 197–207 (KLPGHSKKPED). Tandem repeats lie at residues 184–204 (EEEK…HSKK) and 227–247 (PEEK…YHAK). The 2 X 21 AA repeats, Lys-rich stretch occupies residues 184–247 (EEEKKGFMDK…KEKLPGYHAK (64 aa)).

Belongs to the plant dehydrin family. In stems, cauline leaves, roots and flowers. Low levels found in maturing seeds. Absent in dry seeds.

This Arabidopsis thaliana (Mouse-ear cress) protein is Dehydrin ERD10 (ERD10).